Reading from the N-terminus, the 439-residue chain is Chaperone SurA (439 aa).

Positions 1 to 27 (MRRISSRLSLVLFAALSCATALFPAHA) are cleaved as a signal peptide. 2 consecutive PpiC domains span residues 180 to 281 (GEEF…KLLD) and 293 to 391 (LEQT…QVEA).

It is found in the periplasm. It catalyses the reaction [protein]-peptidylproline (omega=180) = [protein]-peptidylproline (omega=0). Chaperone involved in the correct folding and assembly of outer membrane proteins. Recognizes specific patterns of aromatic residues and the orientation of their side chains, which are found more frequently in integral outer membrane proteins. May act in both early periplasmic and late outer membrane-associated steps of protein maturation. This chain is Chaperone SurA, found in Aromatoleum aromaticum (strain DSM 19018 / LMG 30748 / EbN1) (Azoarcus sp. (strain EbN1)).